Reading from the N-terminus, the 203-residue chain is Putative B3 domain-containing protein At1g50220 (203 aa).

Residues 99 to 195 (DIVGNVALPK…KFIVLNFQHK (97 aa)) constitute a DNA-binding region (TF-B3).

The protein localises to the nucleus. This Arabidopsis thaliana (Mouse-ear cress) protein is Putative B3 domain-containing protein At1g50220.